Here is a 498-residue protein sequence, read N- to C-terminus: MVPVVALVGRPNVGKSTLFNRLTRTRDALVADFPGLTRDRKYGQARLDEEHEFIVIDTGGIDGTEEGVETKMAEQSLAAIDEADVVLFLVDGRAGLTPADEAIAAHLRKIEKPAMLVVNKIDGIDADAACADFWQLGVDDMYQIAAAHGRGVTALLERALAPFFDDLLTSESEEGEIEDLTEFEDAEIAPDEYTEEEAEAEFQRLQEQPIKLAIIGRPNVGKSTLTNRILGEERVVVYDMPGTTRDSIYIPMERDGREYVIIDTAGVRRRGRINETVEKFSVVKTLKAVEDANVVLLVIDARENISDQDLSLLGFALNAGRSIVLAVNKWDGLDNEVKENVKKELDRRLGFVDFARIHFISALHGTGVGHLFESIQEAYKSATTRVGTSVLTRIMKMATDDHQPPMVRGRRIKLKYAHAGGYNPPIVVIHGNMVRELPDSYKRYLMNYFRKSLEIMGTPIRINFQNSENPFENRANKLTLSQERKRKRMMSVVKNRKK.

EngA-type G domains are found at residues 3–167 (PVVA…FDDL) and 210–383 (IKLA…KSAT). GTP contacts are provided by residues 9 to 16 (GRPNVGKS), 57 to 61 (DTGGI), 119 to 122 (NKID), 216 to 223 (GRPNVGKS), 263 to 267 (DTAGV), and 328 to 331 (NKWD). The KH-like domain maps to 384-468 (TRVGTSVLTR…PIRINFQNSE (85 aa)).

Belongs to the TRAFAC class TrmE-Era-EngA-EngB-Septin-like GTPase superfamily. EngA (Der) GTPase family. In terms of assembly, associates with the 50S ribosomal subunit.

Functionally, GTPase that plays an essential role in the late steps of ribosome biogenesis. This chain is GTPase Der, found in Vibrio parahaemolyticus serotype O3:K6 (strain RIMD 2210633).